The chain runs to 347 residues: N-acetyl-gamma-glutamyl-phosphate reductase (347 aa).

Residue C150 is part of the active site.

This sequence belongs to the NAGSA dehydrogenase family. Type 1 subfamily.

It localises to the cytoplasm. The enzyme catalyses N-acetyl-L-glutamate 5-semialdehyde + phosphate + NADP(+) = N-acetyl-L-glutamyl 5-phosphate + NADPH + H(+). Its pathway is amino-acid biosynthesis; L-arginine biosynthesis; N(2)-acetyl-L-ornithine from L-glutamate: step 3/4. Functionally, catalyzes the NADPH-dependent reduction of N-acetyl-5-glutamyl phosphate to yield N-acetyl-L-glutamate 5-semialdehyde. The protein is N-acetyl-gamma-glutamyl-phosphate reductase of Halothermothrix orenii (strain H 168 / OCM 544 / DSM 9562).